We begin with the raw amino-acid sequence, 271 residues long: Tryptophan synthase alpha chain (271 aa).

Catalysis depends on proton acceptor residues E49 and D60.

Belongs to the TrpA family. In terms of assembly, tetramer of two alpha and two beta chains.

It catalyses the reaction (1S,2R)-1-C-(indol-3-yl)glycerol 3-phosphate + L-serine = D-glyceraldehyde 3-phosphate + L-tryptophan + H2O. It participates in amino-acid biosynthesis; L-tryptophan biosynthesis; L-tryptophan from chorismate: step 5/5. Its function is as follows. The alpha subunit is responsible for the aldol cleavage of indoleglycerol phosphate to indole and glyceraldehyde 3-phosphate. In Burkholderia pseudomallei (strain 1106a), this protein is Tryptophan synthase alpha chain.